The sequence spans 383 residues: Succinate--CoA ligase [ADP-forming] subunit beta (383 aa).

The 228-residue stretch at 9-236 (KELLGRFGLR…VEAADPQEHR (228 aa)) folds into the ATP-grasp domain. ATP-binding positions include Lys45, 52 to 54 (GRG), Glu91, Ala94, and Glu99. Residues Asn191 and Asp205 each contribute to the Mg(2+) site. Substrate is bound by residues Asn256 and 313-315 (GIT).

It belongs to the succinate/malate CoA ligase beta subunit family. Heterotetramer of two alpha and two beta subunits. It depends on Mg(2+) as a cofactor.

The enzyme catalyses succinate + ATP + CoA = succinyl-CoA + ADP + phosphate. The catalysed reaction is GTP + succinate + CoA = succinyl-CoA + GDP + phosphate. It participates in carbohydrate metabolism; tricarboxylic acid cycle; succinate from succinyl-CoA (ligase route): step 1/1. Functionally, succinyl-CoA synthetase functions in the citric acid cycle (TCA), coupling the hydrolysis of succinyl-CoA to the synthesis of either ATP or GTP and thus represents the only step of substrate-level phosphorylation in the TCA. The beta subunit provides nucleotide specificity of the enzyme and binds the substrate succinate, while the binding sites for coenzyme A and phosphate are found in the alpha subunit. This Rubrobacter xylanophilus (strain DSM 9941 / JCM 11954 / NBRC 16129 / PRD-1) protein is Succinate--CoA ligase [ADP-forming] subunit beta.